The following is an 883-amino-acid chain: DNA mismatch repair protein MutS (883 aa).

Position 633–640 (633–640) interacts with ATP; that stretch reads GPNMGGKS.

This sequence belongs to the DNA mismatch repair MutS family.

Its function is as follows. This protein is involved in the repair of mismatches in DNA. It is possible that it carries out the mismatch recognition step. This protein has a weak ATPase activity. The sequence is that of DNA mismatch repair protein MutS from Bordetella pertussis (strain Tohama I / ATCC BAA-589 / NCTC 13251).